The chain runs to 90 residues: Small ribosomal subunit protein bS20 (90 aa).

A disordered region spans residues 1–27 (MANSAQAKKRARQNEKRELHNASQRSA).

This sequence belongs to the bacterial ribosomal protein bS20 family.

Binds directly to 16S ribosomal RNA. The chain is Small ribosomal subunit protein bS20 from Coxiella burnetii (strain CbuK_Q154) (Coxiella burnetii (strain Q154)).